We begin with the raw amino-acid sequence, 97 residues long: Putative membrane protein insertion efficiency factor (97 aa).

Belongs to the UPF0161 family.

It is found in the cell membrane. Could be involved in insertion of integral membrane proteins into the membrane. In Lactobacillus johnsonii (strain CNCM I-12250 / La1 / NCC 533), this protein is Putative membrane protein insertion efficiency factor.